Consider the following 99-residue polypeptide: Small integral membrane protein 14 (99 aa).

Topologically, residues 1–49 (MAEGGFDPCECVCSHEHAMRRLINLLRQSQSYCTDTECLRELPGPSSDS) are lumenal. A helical membrane pass occupies residues 50 to 70 (GISITVILMAWMVIAMLLFLL). At 71-99 (RPPNLRGSSLPGKPSSPHSGQDPPAPPVD) the chain is on the cytoplasmic side. A disordered region spans residues 77 to 99 (GSSLPGKPSSPHSGQDPPAPPVD).

In terms of tissue distribution, ubiquitously expressed.

The protein resides in the endoplasmic reticulum membrane. The sequence is that of Small integral membrane protein 14 (Smim14) from Mus musculus (Mouse).